A 142-amino-acid chain; its full sequence is Transcriptional regulator MraZ (142 aa).

2 SpoVT-AbrB domains span residues 5-51 (ASAL…PRPE) and 77-120 (AADV…DAAT).

The protein belongs to the MraZ family. Forms oligomers.

The protein resides in the cytoplasm. Its subcellular location is the nucleoid. The protein is Transcriptional regulator MraZ of Ralstonia nicotianae (strain ATCC BAA-1114 / GMI1000) (Ralstonia solanacearum).